A 179-amino-acid chain; its full sequence is Translation initiation factor IF-3 (179 aa).

It belongs to the IF-3 family. As to quaternary structure, monomer.

It is found in the cytoplasm. In terms of biological role, IF-3 binds to the 30S ribosomal subunit and shifts the equilibrium between 70S ribosomes and their 50S and 30S subunits in favor of the free subunits, thus enhancing the availability of 30S subunits on which protein synthesis initiation begins. This chain is Translation initiation factor IF-3, found in Buchnera aphidicola subsp. Schizaphis graminum (strain Sg).